The chain runs to 110 residues: MSMTDLLNAEDIKKAVGAFSAIDSFDHKKFFQMVGLKKKSADDVKKVFHILDKDKSGFIEEDELGFILKGFSPDARDLSAKETKTLMAAGDKDGDGKIGVDEFSTLVAES.

Position 2 is an N-acetylserine (Ser-2). Phosphoserine is present on residues Ser-2 and Ser-24. EF-hand domains follow at residues 39–74 (KSAD…FSPD) and 78–110 (LSAK…VAES). Positions 52, 54, 56, 58, 60, 63, 91, 93, 95, 97, and 102 each coordinate Ca(2+).

The protein belongs to the parvalbumin family.

In muscle, parvalbumin is thought to be involved in relaxation after contraction. It binds two calcium ions. The polypeptide is Parvalbumin alpha (PVALB) (Macaca fuscata fuscata (Japanese macaque)).